Consider the following 88-residue polypeptide: Small ribosomal subunit protein uS17 (88 aa).

This sequence belongs to the universal ribosomal protein uS17 family. In terms of assembly, part of the 30S ribosomal subunit.

Its function is as follows. One of the primary rRNA binding proteins, it binds specifically to the 5'-end of 16S ribosomal RNA. The protein is Small ribosomal subunit protein uS17 of Oenococcus oeni (strain ATCC BAA-331 / PSU-1).